The following is a 1085-amino-acid chain: Tudor domain-containing protein 7B (1085 aa).

Positions 3-76 (DEELVKKMVR…SGEVMCHATT (74 aa)) constitute an HTH OST-type 1 domain. Disordered stretches follow at residues 112 to 183 (APLV…PEKR), 200 to 228 (RNPQ…SAPY), and 297 to 341 (PAKE…KALS). A compositionally biased stretch (polar residues) spans 203-216 (QHINVPSNLNENTT). The HTH OST-type 2 domain occupies 229 to 299 (SPKLVQSRLQ…PQELLLYPAK (71 aa)). Over residues 322–335 (TQRPSLTAKSNTPE) the composition is skewed to polar residues. One can recognise an HTH OST-type 3 domain in the interval 340 to 410 (LSPDLKQKLG…PKRAILYAKV (71 aa)). Tudor domains lie at 496 to 554 (SPSP…FYRL) and 686 to 743 (RPFC…LLRD). Polar residues predominate over residues 843–853 (NVPTATQTSSL). Residues 843–888 (NVPTATQTSSLKTDRGDKALHTPKKTSPPLGSKSTPAGSPPERLSL) form a disordered region.

Its subcellular location is the cytoplasm. Functionally, component of specific cytoplasmic RNA granules involved in post-transcriptional regulation of specific genes: probably acts by binding to specific mRNAs and regulating their translation. Probably required during spermatogenesis. This chain is Tudor domain-containing protein 7B (tdrd7b), found in Danio rerio (Zebrafish).